The following is a 383-amino-acid chain: Acetylornithine deacetylase (383 aa).

His80 provides a ligand contact to Zn(2+). Asp82 is a catalytic residue. Zn(2+) is bound at residue Asp112. Glu144 is a catalytic residue. The Zn(2+) site is built by Glu145, Glu169, and His355.

The protein belongs to the peptidase M20A family. ArgE subfamily. In terms of assembly, homodimer. Requires Zn(2+) as cofactor. Co(2+) serves as cofactor. Glutathione is required as a cofactor.

Its subcellular location is the cytoplasm. It carries out the reaction N(2)-acetyl-L-ornithine + H2O = L-ornithine + acetate. It participates in amino-acid biosynthesis; L-arginine biosynthesis; L-ornithine from N(2)-acetyl-L-ornithine (linear): step 1/1. Functionally, catalyzes the hydrolysis of the amide bond of N(2)-acetylated L-amino acids. Cleaves the acetyl group from N-acetyl-L-ornithine to form L-ornithine, an intermediate in L-arginine biosynthesis pathway, and a branchpoint in the synthesis of polyamines. The polypeptide is Acetylornithine deacetylase (Salmonella arizonae (strain ATCC BAA-731 / CDC346-86 / RSK2980)).